Reading from the N-terminus, the 249-residue chain is Isoprenyl transferase 1 (249 aa).

Residue aspartate 30 is part of the active site. Aspartate 30 is a binding site for Mg(2+). Substrate contacts are provided by residues 31–34 (GNGR), tryptophan 35, arginine 43, histidine 47, and 75–77 (STE). Asparagine 78 acts as the Proton acceptor in catalysis. Substrate contacts are provided by residues tryptophan 79, arginine 81, arginine 198, and 204–206 (RMS). Residue glutamate 217 coordinates Mg(2+).

Belongs to the UPP synthase family. In terms of assembly, homodimer. Mg(2+) serves as cofactor.

Functionally, catalyzes the condensation of isopentenyl diphosphate (IPP) with allylic pyrophosphates generating different type of terpenoids. The chain is Isoprenyl transferase 1 from Tropheryma whipplei (strain Twist) (Whipple's bacillus).